Reading from the N-terminus, the 168-residue chain is 2-C-methyl-D-erythritol 2,4-cyclodiphosphate synthase (168 aa).

The a divalent metal cation site is built by Asp15 and His17. Residues 15 to 17 (DVH) and 45 to 46 (HS) each bind 4-CDP-2-C-methyl-D-erythritol 2-phosphate. His53 is a binding site for a divalent metal cation. 4-CDP-2-C-methyl-D-erythritol 2-phosphate is bound by residues 72–76 (FPNSD), Phe150, and Arg153.

The protein belongs to the IspF family. As to quaternary structure, homotrimer. A divalent metal cation serves as cofactor.

It catalyses the reaction 4-CDP-2-C-methyl-D-erythritol 2-phosphate = 2-C-methyl-D-erythritol 2,4-cyclic diphosphate + CMP. It functions in the pathway isoprenoid biosynthesis; isopentenyl diphosphate biosynthesis via DXP pathway; isopentenyl diphosphate from 1-deoxy-D-xylulose 5-phosphate: step 4/6. Involved in the biosynthesis of isopentenyl diphosphate (IPP) and dimethylallyl diphosphate (DMAPP), two major building blocks of isoprenoid compounds. Catalyzes the conversion of 4-diphosphocytidyl-2-C-methyl-D-erythritol 2-phosphate (CDP-ME2P) to 2-C-methyl-D-erythritol 2,4-cyclodiphosphate (ME-CPP) with a corresponding release of cytidine 5-monophosphate (CMP). In Anaplasma phagocytophilum (strain HZ), this protein is 2-C-methyl-D-erythritol 2,4-cyclodiphosphate synthase.